The sequence spans 230 residues: Ly6/PLAUR domain-containing protein 8 (230 aa).

An N-terminal signal peptide occupies residues 1–20 (MKSFLFAGIVVVLTVAAVDT). Residues asparagine 37, asparagine 44, asparagine 74, asparagine 77, asparagine 90, asparagine 106, asparagine 110, asparagine 132, asparagine 137, asparagine 156, asparagine 168, asparagine 181, and asparagine 197 are each glycosylated (N-linked (GlcNAc...) asparagine). The UPAR/Ly6 domain occupies 125–172 (CPACYGNNETSCNETRKCYGERCVSIIAEFTNETKTLVLKGCSNVSIS). Serine 211 carries GPI-anchor amidated serine lipidation. A propeptide spans 212-230 (QASFTPLALASILLLSLLL) (removed in mature form).

It belongs to the CNF-like-inhibitor family. Highly N-glycosylated. Not O-glycosylated. In terms of processing, GPI-anchored. The GPI-anchor is cleaved, leading to secretion into the colonic lumen.

The protein localises to the cell membrane. It is found in the secreted. Functionally, secreted protein specifically required to prevent invasion of Gram-negative bacteria in the inner mucus layer of the colon epithelium, a portion of the large intestine which is free of commensal microbiota. Prevents invasion of flagellated microbiota by binding to the flagellum of bacteria, such as P.mirabilis, thereby inhibiting bacterial motility in the intestinal lumen. Segregation of intestinal bacteria and epithelial cells in the colon is required to preserve intestinal homeostasis. This chain is Ly6/PLAUR domain-containing protein 8 (LYPD8), found in Bos taurus (Bovine).